Consider the following 71-residue polypeptide: uncharacterized protein (71 aa).

Residues 24-44 (FGGGGLSTAIYSIFAFFSIPL) form a helical membrane-spanning segment.

The protein resides in the membrane. This is an uncharacterized protein from Schizosaccharomyces pombe (strain 972 / ATCC 24843) (Fission yeast).